Reading from the N-terminus, the 179-residue chain is Large ribosomal subunit protein uL6 (179 aa).

It belongs to the universal ribosomal protein uL6 family. Part of the 50S ribosomal subunit.

This protein binds to the 23S rRNA, and is important in its secondary structure. It is located near the subunit interface in the base of the L7/L12 stalk, and near the tRNA binding site of the peptidyltransferase center. The sequence is that of Large ribosomal subunit protein uL6 from Alkaliphilus oremlandii (strain OhILAs) (Clostridium oremlandii (strain OhILAs)).